Reading from the N-terminus, the 132-residue chain is Small ribosomal subunit protein uS8 (132 aa).

It belongs to the universal ribosomal protein uS8 family. In terms of assembly, part of the 30S ribosomal subunit. Contacts proteins S5 and S12.

In terms of biological role, one of the primary rRNA binding proteins, it binds directly to 16S rRNA central domain where it helps coordinate assembly of the platform of the 30S subunit. The sequence is that of Small ribosomal subunit protein uS8 from Streptococcus mutans serotype c (strain ATCC 700610 / UA159).